A 217-amino-acid chain; its full sequence is Small ribosomal subunit protein uS5 (217 aa).

Residues 49–112 enclose the S5 DRBM domain; it reads LEEKVLDVKL…AQAKKNIIRV (64 aa).

It belongs to the universal ribosomal protein uS5 family. As to quaternary structure, part of the 30S ribosomal subunit. Contacts protein S4.

With S4 and S12 plays an important role in translational accuracy. The sequence is that of Small ribosomal subunit protein uS5 from Methanocaldococcus jannaschii (strain ATCC 43067 / DSM 2661 / JAL-1 / JCM 10045 / NBRC 100440) (Methanococcus jannaschii).